Consider the following 238-residue polypeptide: Small ribosomal subunit protein uS2 (238 aa).

Belongs to the universal ribosomal protein uS2 family.

The polypeptide is Small ribosomal subunit protein uS2 (Prochlorococcus marinus (strain MIT 9211)).